A 386-amino-acid chain; its full sequence is Acetylornithine aminotransferase (386 aa).

Pyridoxal 5'-phosphate contacts are provided by residues 94–95 (GT) and Phe-121. Arg-124 contacts N(2)-acetyl-L-ornithine. A pyridoxal 5'-phosphate-binding site is contributed by 206 to 209 (DEVQ). Lys-235 is subject to N6-(pyridoxal phosphate)lysine. Ser-263 is a N(2)-acetyl-L-ornithine binding site. Pyridoxal 5'-phosphate is bound at residue Thr-264.

It belongs to the class-III pyridoxal-phosphate-dependent aminotransferase family. ArgD subfamily. In terms of assembly, homodimer. The cofactor is pyridoxal 5'-phosphate.

The protein localises to the cytoplasm. The catalysed reaction is N(2)-acetyl-L-ornithine + 2-oxoglutarate = N-acetyl-L-glutamate 5-semialdehyde + L-glutamate. Its pathway is amino-acid biosynthesis; L-arginine biosynthesis; N(2)-acetyl-L-ornithine from L-glutamate: step 4/4. The protein is Acetylornithine aminotransferase of Listeria monocytogenes serovar 1/2a (strain ATCC BAA-679 / EGD-e).